Reading from the N-terminus, the 205-residue chain is Ypt/Rab-type GTPase Rab7 (205 aa).

GTP is bound by residues 17-23 (SGVGKTS), 33-40 (FSASYKAT), Gly66, 125-128 (NKID), and 157-159 (SAK). The Effector region motif lies at 37–45 (YKATIGADF). Residues Cys203 and Cys205 are each lipidated (S-geranylgeranyl cysteine). A Cysteine methyl ester modification is found at Cys205.

Belongs to the small GTPase superfamily. Rab family.

It localises to the cell membrane. Its activity is regulated as follows. Alternates between an inactive form bound to GDP and an active form bound to GTP. Activated by guanine nucleotide-exchange factors (GEFs), and inactivated by GTPase-activating proteins (GAPs). In terms of biological role, ypt/Rab-type GTPases are key regulators of membrane trafficking and intracellular vesicular transport. They act as molecular switches that convert between GTP-bound and GDP-bound states, and regulate virtually all steps of membrane traffic from the formation of the transport vesicle at the donor membrane to its fusion at the target membrane. In the GDP-bound state, Ypt proteins are predominantly cytosolic, solubilized through the interaction with a GDP dissociation inhibitor (GDI). In the GTP-bound state, the proteins are membrane bound and interact with specific effector proteins that select cargo, promote vesicle movement, or verify the correct site of fusion. The protein is Ypt/Rab-type GTPase Rab7 (gtp-14) of Neurospora crassa (strain ATCC 24698 / 74-OR23-1A / CBS 708.71 / DSM 1257 / FGSC 987).